The primary structure comprises 115 residues: Phosphoribosyl-AMP cyclohydrolase (115 aa).

Asp-80 lines the Mg(2+) pocket. Cys-81 provides a ligand contact to Zn(2+). Residues Asp-82 and Asp-84 each contribute to the Mg(2+) site. Positions 97 and 104 each coordinate Zn(2+).

This sequence belongs to the PRA-CH family. As to quaternary structure, homodimer. It depends on Mg(2+) as a cofactor. The cofactor is Zn(2+).

The protein resides in the cytoplasm. It carries out the reaction 1-(5-phospho-beta-D-ribosyl)-5'-AMP + H2O = 1-(5-phospho-beta-D-ribosyl)-5-[(5-phospho-beta-D-ribosylamino)methylideneamino]imidazole-4-carboxamide. Its pathway is amino-acid biosynthesis; L-histidine biosynthesis; L-histidine from 5-phospho-alpha-D-ribose 1-diphosphate: step 3/9. Functionally, catalyzes the hydrolysis of the adenine ring of phosphoribosyl-AMP. In Nocardia farcinica (strain IFM 10152), this protein is Phosphoribosyl-AMP cyclohydrolase.